Here is a 40-residue protein sequence, read N- to C-terminus: Mu-thomitoxin-Hme1b (40 aa).

3 disulfides stabilise this stretch: Cys2–Cys18, Cys9–Cys22, and Cys17–Cys33.

The protein belongs to the neurotoxin 19 (CSTX) family. In terms of processing, contains 3 disulfide bonds. As to expression, expressed by the venom gland.

Its subcellular location is the secreted. Its function is as follows. Blocks the Nav1.2/SCN2A, Nav1.4/SCN4A, Nav1.5/SCN5A and Nav1.6/SCN8A sodium channels. Shows a slight preference for the Nav1.2 and Nav1.4 channels. Reduces the peak amplitude of the sodium current and negatively shifts the steady-state inactivation process. Does not shift the threshold potential of activation or the voltage corresponding to maximal current. Does not change the reversal potential of the sodium current. May act on site 1 of the receptor. This is Mu-thomitoxin-Hme1b from Heriaeus mellotteei (Crab spider).